Consider the following 242-residue polypeptide: Ribonuclease PH (242 aa).

Phosphate-binding positions include Arg-86 and 124 to 126 (GTR).

This sequence belongs to the RNase PH family. In terms of assembly, homohexameric ring arranged as a trimer of dimers.

The enzyme catalyses tRNA(n+1) + phosphate = tRNA(n) + a ribonucleoside 5'-diphosphate. Phosphorolytic 3'-5' exoribonuclease that plays an important role in tRNA 3'-end maturation. Removes nucleotide residues following the 3'-CCA terminus of tRNAs; can also add nucleotides to the ends of RNA molecules by using nucleoside diphosphates as substrates, but this may not be physiologically important. Probably plays a role in initiation of 16S rRNA degradation (leading to ribosome degradation) during starvation. This Photorhabdus laumondii subsp. laumondii (strain DSM 15139 / CIP 105565 / TT01) (Photorhabdus luminescens subsp. laumondii) protein is Ribonuclease PH.